The following is a 218-amino-acid chain: Probable transaldolase (218 aa).

The active-site Schiff-base intermediate with substrate is the Lys87.

Belongs to the transaldolase family. Type 3B subfamily.

It localises to the cytoplasm. It catalyses the reaction D-sedoheptulose 7-phosphate + D-glyceraldehyde 3-phosphate = D-erythrose 4-phosphate + beta-D-fructose 6-phosphate. It participates in carbohydrate degradation; pentose phosphate pathway; D-glyceraldehyde 3-phosphate and beta-D-fructose 6-phosphate from D-ribose 5-phosphate and D-xylulose 5-phosphate (non-oxidative stage): step 2/3. Its function is as follows. Transaldolase is important for the balance of metabolites in the pentose-phosphate pathway. The sequence is that of Probable transaldolase from Parabacteroides distasonis (strain ATCC 8503 / DSM 20701 / CIP 104284 / JCM 5825 / NCTC 11152).